The chain runs to 552 residues: Nucleoside-diphosphatase mig-23 (552 aa).

The Cytoplasmic portion of the chain corresponds to Met-1 to Arg-6. A helical transmembrane segment spans residues Phe-7–Val-27. Residues Glu-28–Glu-489 are Lumenal-facing. Glu-174 acts as the Proton acceptor in catalysis. Asn-190 and Asn-284 each carry an N-linked (GlcNAc...) asparagine glycan. A helical membrane pass occupies residues Ser-490–Ala-510. Topologically, residues Lys-511–Ala-552 are cytoplasmic.

The protein belongs to the GDA1/CD39 NTPase family. In terms of tissue distribution, expressed in body wall muscles.

Its subcellular location is the golgi apparatus membrane. It catalyses the reaction a ribonucleoside 5'-diphosphate + H2O = a ribonucleoside 5'-phosphate + phosphate + H(+). Seems to be able to hydrolyze ADP, UDP and GDP. Supports mig-17 glycosylation and surface expression, which is required for proper migration of distal tip cells during gonad morphogenesis. This chain is Nucleoside-diphosphatase mig-23 (mig-23), found in Caenorhabditis elegans.